The sequence spans 1308 residues: Chromosome partition protein Smc (1308 aa).

34-41 (PNGCGKSN) lines the ATP pocket. The disordered stretch occupies residues 115–181 (AAREASMEEV…VAEGQPSDAQ (67 aa)). Low complexity predominate over residues 137–169 (TEAEATEQQAAPSEGAAPTTEATAPSTENEAAP). Positions 278–600 (ITKYKTKKRL…DTLRAEYATL (323 aa)) form a coiled coil. In terms of domain architecture, SMC hinge spans 637 to 757 (AGVLADFLEV…VPDPAIGREL (121 aa)). Coiled coils occupy residues 791 to 1046 (SLKR…ELHA) and 1110 to 1148 (MALEEYKETAQRHEFLETQRKDLLDSIENTQNTIKEIDQ).

This sequence belongs to the SMC family. Homodimer.

The protein localises to the cytoplasm. In terms of biological role, required for chromosome condensation and partitioning. The polypeptide is Chromosome partition protein Smc (Koribacter versatilis (strain Ellin345)).